A 390-amino-acid chain; its full sequence is Tuftelin (390 aa).

2 coiled-coil regions span residues 88-126 (DKMI…KLDR) and 162-351 (DTHI…IEKQ). Serine 171 is subject to Phosphoserine.

The protein belongs to the tuftelin family. As to quaternary structure, interacts with TFIP11. In terms of tissue distribution, present in the extracellular enamel and is mainly associated with the crystal component.

It localises to the secreted. Functionally, involved in the structural organization of the epidermis. Involved in the mineralization and structural organization of enamel. The chain is Tuftelin (TUFT1) from Bos taurus (Bovine).